The primary structure comprises 223 residues: UPF0502 protein Avin_04790 (223 aa).

It belongs to the UPF0502 family.

The chain is UPF0502 protein Avin_04790 from Azotobacter vinelandii (strain DJ / ATCC BAA-1303).